Here is an 86-residue protein sequence, read N- to C-terminus: Small ribosomal subunit protein bS20 (86 aa).

A compositionally biased stretch (polar residues) spans 1 to 11 (MANIKSQIKRN). A disordered region spans residues 1–20 (MANIKSQIKRNLTNEKRHQA).

It belongs to the bacterial ribosomal protein bS20 family.

Its function is as follows. Binds directly to 16S ribosomal RNA. The protein is Small ribosomal subunit protein bS20 of Acholeplasma laidlawii (strain PG-8A).